We begin with the raw amino-acid sequence, 387 residues long: MRTLRRLKFMSSPSLSDLGKREPGAAGADERGTQQRRACANATWNSIHNGVIAVFQRKGLPDQELFILNEGVRQLLKTELGSFFTEYLQNQLLTKGMVILRDKIRFYEGQKLLDSLAETWDFFFSDVLPTLQAIFYPVQGKEPSVRQLALLHFRNTITLSVKLEDALARSHACVPPAIAQMLLVLQGVHESRGVTEDYLRLETLIQKVVSPYLGTYGLYSNEGPCTHSCILEKRFLRRSRSGDILAKNPVVRSKSYNTPLLNPVAEHEAEGTASGGTSIRRHSVSEMTSCPEPQGFVDTPDQGPSGTFRSSPSPHSGPCPSRLYPPAHSPEQGPDHGSPPTSSPETLVDQILESVDSDSEGIFIDFGRGSRSSVSDFEAAGGRPSVV.

Interaction with RICTOR stretches follow at residues 10 to 96 (MSSP…LTKG) and 189 to 219 (HESRGVTEDYLRLETLIQKVVSPYLGTYGLY). Residues 11–33 (SSPSLSDLGKREPGAAGADERGT) are disordered. Residues 18 to 33 (LGKREPGAAGADERGT) show a composition bias toward basic and acidic residues. Position 253 is a phosphoserine (Ser-253). 2 disordered regions span residues 262-347 (NPVA…PETL) and 365-387 (DFGRGSRSSVSDFEAAGGRPSVV). A compositionally biased stretch (low complexity) spans 310-321 (SSPSPHSGPCPS). Ser-373 carries the phosphoserine modification.

This sequence belongs to the PROTOR family. Associated component of the mechanistic target of rapamycin complex 2 (mTORC2). Binds directly to MTOR and RICTOR within the TORC2 complex.

Its function is as follows. Associated subunit of mTORC2, which regulates cell growth and survival in response to hormonal signals. mTORC2 is activated by growth factors, but, in contrast to mTORC1, seems to be nutrient-insensitive. mTORC2 seems to function upstream of Rho GTPases to regulate the actin cytoskeleton, probably by activating one or more Rho-type guanine nucleotide exchange factors. PRR5 plays an important role in regulation of PDGFRB expression and in modulation of platelet-derived growth factor signaling. May act as a tumor suppressor in breast cancer. This chain is Proline-rich protein 5, found in Rattus norvegicus (Rat).